The chain runs to 270 residues: Structure-specific endonuclease subunit SLX1 (270 aa).

Positions 9 to 94 (RFFGVYLLYC…PQASRRLTHV (86 aa)) constitute a GIY-YIG domain. Residues 182–234 (CSLCARLLQDEEGPLCCPHPGCPLRAHIICLAEEFLQEEPGQLLPLEGHCPSC) form an SLX1-type zinc finger.

The protein belongs to the SLX1 family. In terms of assembly, forms a heterodimer with SLX4. Requires a divalent metal cation as cofactor. In terms of tissue distribution, expressed in testis, colon, bone marrow, brain, thymus and to a lesser extent in heart, kidney, skeletal muscle and spleen.

The protein localises to the nucleus. Functionally, catalytic subunit of the SLX1-SLX4 structure-specific endonuclease that resolves DNA secondary structures generated during DNA repair and recombination. Has endonuclease activity towards branched DNA substrates, introducing single-strand cuts in duplex DNA close to junctions with ss-DNA. Has a preference for 5'-flap structures, and promotes symmetrical cleavage of static and migrating Holliday junctions (HJs). Resolves HJs by generating two pairs of ligatable, nicked duplex products. This chain is Structure-specific endonuclease subunit SLX1 (Slx1b), found in Mus musculus (Mouse).